Here is a 172-residue protein sequence, read N- to C-terminus: Ly6/PLAUR domain-containing protein 6B (172 aa).

A signal peptide spans 1-25 (MLLLCHILAVTILQILIISENWVFA). The UPAR/Ly6 domain maps to 46–137 (FKCFTCENAG…VELPTNHTNA (92 aa)). The interval 46 to 140 (FKCFTCENAG…PTNHTNAVFA (95 aa)) is sufficient for inhibiting alpha-7 nAChR currents. 6 disulfide bridges follow: cysteine 48-cysteine 76, cysteine 51-cysteine 60, cysteine 69-cysteine 95, cysteine 101-cysteine 120, cysteine 106-cysteine 117, and cysteine 121-cysteine 126. A lipid anchor (GPI-anchor amidated serine) is attached at serine 148. The propeptide at 149–172 (GSSVSSVPSPYLLVLAWLFMLPLL) is removed in mature form.

It is found in the cell membrane. Its function is as follows. Likely acts as a modulator of nicotinic acetylcholine receptors (nAChRs) activity. In vitro acts on nAChRs in a subtype- and stoichiometry-dependent manner. Modulates specifically alpha-3(3):beta-4(2) nAChRs by enhancing the sensitivity to ACh, decreasing ACh-induced maximal current response and increasing the rate of desensitization to ACh; has no effect on alpha-7 homomeric nAChRs; modulates alpha-3(2):alpha-5:beta-4(2) nAChRs in the context of CHRNA5/alpha-5 variant Asn-398 but not its wild-type sequence. However, according to another report in vitro it can weakly inhibits alpha-7 nAChRs. In Mus musculus (Mouse), this protein is Ly6/PLAUR domain-containing protein 6B (Lypd6b).